The primary structure comprises 1004 residues: Importin subunit beta-5 (1004 aa).

An N-acetylmethionine modification is found at Met-1. An Importin N-terminal domain is found at 21 to 100 (AETQLLQWCD…REVLLKLCLN (80 aa)).

This sequence belongs to the importin beta family. In terms of assembly, interacts with NAP1.

Its subcellular location is the cytoplasm. It is found in the nucleus. The protein resides in the nuclear pore complex. In terms of biological role, required for nuclear protein import and mediates docking of import substrate to distinct nucleoporins. Serves a receptor for nuclear localization signals. Mediates the nuclear import of TATA-binding protein (TBP) and of histones H2A and H2B. This Saccharomyces cerevisiae (strain ATCC 204508 / S288c) (Baker's yeast) protein is Importin subunit beta-5 (KAP114).